A 355-amino-acid polypeptide reads, in one-letter code: Squamosa promoter-binding protein-like 15 (355 aa).

The segment at 1 to 27 (MELLKGSGLNQTESGGSSSTESSSLSG) is disordered. Over residues 12–27 (TESGGSSSTESSSLSG) the composition is skewed to low complexity. An SBP-type zinc finger spans residues 61–138 (TARCQVEGCR…ACHNERRRKP (78 aa)). Zn(2+) contacts are provided by Cys64, Cys69, Cys86, His89, Cys105, Cys108, His112, and Cys124. Residues 121–137 (KRSCRRRLACHNERRRK) carry the Bipartite nuclear localization signal motif.

The protein localises to the nucleus. Its function is as follows. Probable transcription factor required for the flowering response to vernalization in the shoot apical meristem (SAM). Defines the competence of shoot meristems to flower in response to vernalization in perennials. The sequence is that of Squamosa promoter-binding protein-like 15 from Arabis alpina (Alpine rock-cress).